The sequence spans 302 residues: Transmembrane protein 191 (302 aa).

Residues 5 to 147 (QEQLLQLQKD…HLELAEAKFS (143 aa)) adopt a coiled-coil conformation. The tract at residues 39–66 (LTGRLEELRERERSLQRRRSQASRAIRG) is disordered. Over residues 42–53 (RLEELRERERSL) the composition is skewed to basic and acidic residues. A helical transmembrane segment spans residues 242 to 262 (LQTLLLLPLGFLVLPLIYVVL).

The protein belongs to the TMEM191 family.

It localises to the membrane. The chain is Transmembrane protein 191 from Mus musculus (Mouse).